A 427-amino-acid chain; its full sequence is Peptidase B (427 aa).

Residues Lys-195 and Asp-200 each coordinate Mn(2+). Lys-207 is an active-site residue. The Mn(2+) site is built by Asp-218, Asp-277, and Glu-279. Arg-281 is an active-site residue.

The protein belongs to the peptidase M17 family. As to quaternary structure, homohexamer. Requires Mn(2+) as cofactor.

The protein localises to the cytoplasm. It carries out the reaction Release of an N-terminal amino acid, Xaa, from a peptide or arylamide. Xaa is preferably Glu or Asp but may be other amino acids, including Leu, Met, His, Cys and Gln.. Its function is as follows. Probably plays an important role in intracellular peptide degradation. In Escherichia coli O139:H28 (strain E24377A / ETEC), this protein is Peptidase B.